The following is a 385-amino-acid chain: Neuropeptide Y receptor type 2 (385 aa).

Residues 1 to 54 (MGPLEAIGEENQTDEMKMELFTKLYLPRYTTPVSELALDPKPELKDSTTLVEVQ) are Extracellular-facing. Asn11 carries an N-linked (GlcNAc...) asparagine glycan. The chain crosses the membrane as a helical span at residues 55 to 75 (IILIFAYCSIILLGVIGNSLV). Residues 76–90 (IHVIIKFKSMRTVTN) are Cytoplasmic-facing. A helical transmembrane segment spans residues 91-111 (FFIANLAVADLLVNTLCLPFT). The Extracellular portion of the chain corresponds to 112 to 128 (LVYTLLGEWKLGPVLCH). A disulfide bridge connects residues Cys127 and Cys207. Residues 129–149 (LVPYAQALAVHVSTVTLTVIA) traverse the membrane as a helical segment. Residues 150–169 (LDRHRCIVYHLESKISKRIS) lie on the Cytoplasmic side of the membrane. Residues 170 to 190 (FLIIGVAWAVSALLASPLAIF) traverse the membrane as a helical segment. Topologically, residues 191-221 (REYSLIEIIPDFKIVVCSEKWPGEGQLNYGT) are extracellular. The chain crosses the membrane as a helical span at residues 222–242 (IYSVSMLLIQYVLPLAIISYA). Residues 243–273 (YTRIWTKLKNHVSPGAGNDHYHHRRQKTTKM) are Cytoplasmic-facing. A helical transmembrane segment spans residues 274 to 294 (LVCVVVVFAVSWLPFHAFQLV). Over 295–308 (SDIDSQVLDLKEYK) the chain is Extracellular. Residues 309–329 (LIYTVFHVIAMCSTFANPLLY) form a helical membrane-spanning segment. Over 330 to 385 (GWMNNNYRTAFLTAFQCEQRLDSIHPEVSAAFKARKKLEAKKSQFPGDSFTQPTNV) the chain is Cytoplasmic. The S-palmitoyl cysteine moiety is linked to residue Cys346.

It belongs to the G-protein coupled receptor 1 family.

The protein localises to the cell membrane. Functionally, receptor for neuropeptide Y and peptide YY. The polypeptide is Neuropeptide Y receptor type 2 (NPY2R) (Gallus gallus (Chicken)).